The primary structure comprises 195 residues: Recombination protein RecR (195 aa).

The C4-type zinc-finger motif lies at 53-68 (CTICHNLDTISPCSIC). The region spanning 76–171 (SIICVVEELG…KVTRLACGIP (96 aa)) is the Toprim domain.

The protein belongs to the RecR family.

In terms of biological role, may play a role in DNA repair. It seems to be involved in an RecBC-independent recombinational process of DNA repair. It may act with RecF and RecO. This is Recombination protein RecR from Anaplasma marginale (strain St. Maries).